A 362-amino-acid chain; its full sequence is Biotin synthase (362 aa).

A disordered region spans residues 14 to 39; that stretch reads AQRTPEPLPPTSQGLARPSHDVVRGP. The Radical SAM core domain maps to 87-316; it reads HKGGPAALCG…ARDILVCGGR (230 aa). Positions 105, 109, and 112 each coordinate [4Fe-4S] cluster. [2Fe-2S] cluster is bound by residues cysteine 181 and cysteine 241.

It belongs to the radical SAM superfamily. Biotin synthase family. In terms of assembly, homodimer. [4Fe-4S] cluster is required as a cofactor. [2Fe-2S] cluster serves as cofactor.

The enzyme catalyses (4R,5S)-dethiobiotin + (sulfur carrier)-SH + 2 reduced [2Fe-2S]-[ferredoxin] + 2 S-adenosyl-L-methionine = (sulfur carrier)-H + biotin + 2 5'-deoxyadenosine + 2 L-methionine + 2 oxidized [2Fe-2S]-[ferredoxin]. It functions in the pathway cofactor biosynthesis; biotin biosynthesis; biotin from 7,8-diaminononanoate: step 2/2. Catalyzes the conversion of dethiobiotin (DTB) to biotin by the insertion of a sulfur atom into dethiobiotin via a radical-based mechanism. In Nitratidesulfovibrio vulgaris (strain ATCC 29579 / DSM 644 / CCUG 34227 / NCIMB 8303 / VKM B-1760 / Hildenborough) (Desulfovibrio vulgaris), this protein is Biotin synthase.